Reading from the N-terminus, the 433-residue chain is Probable phosphoglucosamine mutase (433 aa).

Catalysis depends on Ser91, which acts as the Phosphoserine intermediate. Residues Ser91, Asp229, Asp231, and Asp233 each coordinate Mg(2+). Ser91 carries the phosphoserine modification.

The protein belongs to the phosphohexose mutase family. Requires Mg(2+) as cofactor. Post-translationally, activated by phosphorylation.

The enzyme catalyses alpha-D-glucosamine 1-phosphate = D-glucosamine 6-phosphate. Functionally, catalyzes the conversion of glucosamine-6-phosphate to glucosamine-1-phosphate. This chain is Probable phosphoglucosamine mutase, found in Methanococcoides burtonii (strain DSM 6242 / NBRC 107633 / OCM 468 / ACE-M).